A 340-amino-acid chain; its full sequence is Flap endonuclease 1 (340 aa).

Residues 1-98 are N-domain; sequence MGVPIGEIIP…KELEKRREAR (98 aa). Asp27, Asp80, Glu152, Glu154, Asp173, Asp175, and Asp236 together coordinate Mg(2+). The tract at residues 116 to 258 is I-domain; that stretch reads EARKYAQRAT…KALEIVRHSK (143 aa). An interaction with PCNA region spans residues 330–338; it reads KQSTLESWF.

The protein belongs to the XPG/RAD2 endonuclease family. FEN1 subfamily. As to quaternary structure, interacts with PCNA. PCNA stimulates the nuclease activity without altering cleavage specificity. Requires Mg(2+) as cofactor.

Structure-specific nuclease with 5'-flap endonuclease and 5'-3' exonuclease activities involved in DNA replication and repair. During DNA replication, cleaves the 5'-overhanging flap structure that is generated by displacement synthesis when DNA polymerase encounters the 5'-end of a downstream Okazaki fragment. Binds the unpaired 3'-DNA end and kinks the DNA to facilitate 5' cleavage specificity. Cleaves one nucleotide into the double-stranded DNA from the junction in flap DNA, leaving a nick for ligation. Also involved in the base excision repair (BER) pathway. Acts as a genome stabilization factor that prevents flaps from equilibrating into structures that lead to duplications and deletions. Also possesses 5'-3' exonuclease activity on nicked or gapped double-stranded DNA. The sequence is that of Flap endonuclease 1 from Pyrococcus furiosus (strain ATCC 43587 / DSM 3638 / JCM 8422 / Vc1).